Here is a 656-residue protein sequence, read N- to C-terminus: Pheromone-regulated membrane protein 2 (656 aa).

4 consecutive transmembrane segments (helical) span residues 16–36, 320–340, 422–442, and 634–654; these read FFSCIFHPLLLIFFTSVILTI, IIFTVMYFAFVILLMAIERIL, WIISNGAHLWLFGFLMLLIHW, and WGLLAVCLTILFHHMLIFIIL.

The protein resides in the membrane. The protein is Pheromone-regulated membrane protein 2 (PRM2) of Saccharomyces cerevisiae (strain ATCC 204508 / S288c) (Baker's yeast).